A 484-amino-acid chain; its full sequence is Transmembrane protein 161B (484 aa).

Residues 108-128 form a helical membrane-spanning segment; sequence LVDFTVAATVVYLITELYFCV. Asn-136 carries N-linked (GlcNAc...) asparagine glycosylation. 2 consecutive transmembrane segments (helical) span residues 137–157 and 170–190; these read ISVV…FSLT and SLCI…LIVT. N-linked (GlcNAc...) asparagine glycosylation occurs at Asn-204. Helical transmembrane passes span 229–249, 266–286, 368–388, and 456–476; these read FKLI…FPGL, VTQT…LLWV, VFYY…MLLH, and LSFF…FGLF.

This sequence belongs to the TMEM161 family.

The protein localises to the cell membrane. Its function is as follows. Essential for maintaining normal cardiac rhythm in the developing heart and for neonatal survival. Inhibits potassium and calcium currents in the cardiomyocytes, this assists in timely action potential repolarization and thereby maintains normal cardiac rhythm. In Danio rerio (Zebrafish), this protein is Transmembrane protein 161B (tmem161b).